The primary structure comprises 417 residues: MAEGSYGFLCREDGSWWRSWLQQSYTSVRDKSAEALEFMKRDLNEFTRVVQHDTACTIAATASVVKEKLVVEGSSGTTEKVKKGLSDFLGVISDTFAPSPDKTIDCDVITLMATPSGTTELYDSTKARLYSLQSDPATYCNEPDGSPAEFDAWLAYWDPEQRKAEISEPLVTSPSIRALFTKMVPAAVSHSEFWQRYFYKVHQLEQEEARRDALKQRANQSVHSEEPKWEEEEEDFVGAALTPALKLKEKCVISPPTIPTLHVEDKSEKTAELNRDHTSVTSPSESSESISPITQIANPEYIEQTSSKDPSLCTLTVTKEKIAAETDKSSAPVEQTGKSNAQMGTHREDPPSDLRVFELNSDSGKSTPSNNGQKGSSTDVSEDWEKDFDMTEEEVQMALSGVEVSGEVEDEDWENWE.

The BSD domain occupies 153-205 (WLAYWDPEQRKAEISEPLVTSPSIRALFTKMVPAAVSHSEFWQRYFYKVHQLE). Disordered stretches follow at residues 215 to 234 (KQRA…EEEE), 262 to 292 (HVED…SISP), and 323 to 390 (AAET…DFDM). A compositionally biased stretch (basic and acidic residues) spans 262-278 (HVEDKSEKTAELNRDHT). Residues 281-292 (TSPSESSESISP) show a composition bias toward low complexity. Over residues 332–343 (PVEQTGKSNAQM) the composition is skewed to polar residues. Positions 345–356 (THREDPPSDLRV) are enriched in basic and acidic residues. Polar residues predominate over residues 360-379 (NSDSGKSTPSNNGQKGSSTD). Residues 380 to 390 (VSEDWEKDFDM) show a composition bias toward acidic residues.

This is BSD domain-containing protein 1-B (bsdc1-b) from Xenopus laevis (African clawed frog).